The sequence spans 365 residues: S-adenosylmethionine:tRNA ribosyltransferase-isomerase (365 aa).

It belongs to the QueA family. In terms of assembly, monomer.

The protein resides in the cytoplasm. The catalysed reaction is 7-aminomethyl-7-carbaguanosine(34) in tRNA + S-adenosyl-L-methionine = epoxyqueuosine(34) in tRNA + adenine + L-methionine + 2 H(+). Its pathway is tRNA modification; tRNA-queuosine biosynthesis. Its function is as follows. Transfers and isomerizes the ribose moiety from AdoMet to the 7-aminomethyl group of 7-deazaguanine (preQ1-tRNA) to give epoxyqueuosine (oQ-tRNA). This is S-adenosylmethionine:tRNA ribosyltransferase-isomerase from Rickettsia peacockii (strain Rustic).